The primary structure comprises 764 residues: Reticulon-1 (764 aa).

Disordered stretches follow at residues 1–37, 115–147, 247–400, and 455–475; these read MAAN…GGAL, PDIK…SGIE, LYNS…SEIE, and ESCD…DSPM. Residues 261–282 are compositionally biased toward polar residues; it reads VTISFTGMETTLQTEYPENQQG. A compositionally biased stretch (basic and acidic residues) spans 328 to 337; it reads EEQRKYKISE. A Reticulon domain is found at 578 to 764; the sequence is AIELLYWRDI…AKIPGTKQKE (187 aa). 2 helical membrane passes run 607–627 and 696–716; these read FSVV…TISF and VLMW…LLIM.

Its subcellular location is the endoplasmic reticulum membrane. The protein localises to the nucleus. In terms of biological role, inhibits amyloid precursor protein processing, probably by blocking BACE1 activity. The chain is Reticulon-1 from Xenopus tropicalis (Western clawed frog).